Consider the following 316-residue polypeptide: MDIPLDAAEIRPEPPNSLDLNGSSTRKIKLTAPNINLSLDHSEGSILSDDNLDTPDELDINVDDLDTPDEADSFDYTGQDDQPALGEAVQEDFESIQEYTAEEERADNRLWRTVVIGEQEQRIDMKVIEPYKKVISHGGYYGEGVNAIIVFAACFLPDSSRPDYNYVMENLFLYVISTLELMVAEDYMVVYLNGATPRRKMPGLGWMKKCYQMIDRRLRKNLKSFIIVHPSWFIRTILALTRPFISSKFSSKIKYVSTLAELSELIPMEYVHIPETIVKLDEELRESESPKAGCLPNEPEMNTLEEEFENKMGDND.

Positions 1-24 are disordered; the sequence is MDIPLDAAEIRPEPPNSLDLNGSS. The CRAL-TRIO domain occupies 128–285; sequence IEPYKKVISH…TIVKLDEELR (158 aa). Positions 287–316 are disordered; it reads SESPKAGCLPNEPEMNTLEEEFENKMGDND.

The protein localises to the cytoplasm. The protein is Protein prune homolog 2 (Prune2) of Xenopus tropicalis (Western clawed frog).